A 113-amino-acid polypeptide reads, in one-letter code: Hydrogenase maturation factor HypA (113 aa).

Position 2 (His2) interacts with Ni(2+). Zn(2+)-binding residues include Cys70, Cys73, Cys86, and Cys88.

The protein belongs to the HypA/HybF family.

Involved in the maturation of [NiFe] hydrogenases. Required for nickel insertion into the metal center of the hydrogenase. This Nostoc punctiforme (strain ATCC 29133 / PCC 73102) protein is Hydrogenase maturation factor HypA.